The following is a 184-amino-acid chain: GTPase RhebL1 (184 aa).

GTP is bound by residues 16-21 (SVGKTS), 32-38 (LEGYDPT), G63, 119-122 (NKAD), and 149-150 (SA). The Effector region signature appears at 35–43 (YDPTVENTY). Residue T38 coordinates Mg(2+). C181 is subject to Cysteine methyl ester. The S-farnesyl cysteine moiety is linked to residue C181. The propeptide at 182–184 (YLM) is removed in mature form.

The protein belongs to the small GTPase superfamily. Rheb family. In terms of assembly, interacts with MTOR.

The protein resides in the endomembrane system. Its subcellular location is the cytoplasm. It catalyses the reaction GTP + H2O = GDP + phosphate + H(+). In terms of biological role, binds GTP and exhibits intrinsic GTPase activity. May activate NF-kappa-B-mediated gene transcription. Promotes signal transduction through MTOR, activates RPS6KB1, and is a downstream target of the small GTPase-activating proteins TSC1 and TSC2. This chain is GTPase RhebL1 (Rhebl1), found in Mus musculus (Mouse).